The primary structure comprises 1212 residues: Metabotropic glutamate receptor 5 (1212 aa).

Residues 1-20 (MVLLLILSVLLLKEDVRGSA) form the signal peptide. Residues 22–580 (SSERRVVAHM…QYLRWGDPEP (559 aa)) are Extracellular-facing. Residues C57 and C99 are joined by a disulfide bond. Position 64 (Y64) interacts with L-glutamate. An N-linked (GlcNAc...) asparagine glycan is attached at N88. Residues S152 and 173 to 175 (SAT) contribute to the L-glutamate site. An N-linked (GlcNAc...) asparagine glycan is attached at N210. An L-glutamate-binding site is contributed by Y223. 8 disulfides stabilise this stretch: C241–C530, C276–C278, C365–C381, C419–C426, C511–C531, C515–C534, C537–C549, and C552–C565. D305 provides a ligand contact to L-glutamate. 2 N-linked (GlcNAc...) asparagine glycosylation sites follow: N378 and N382. K396 serves as a coordination point for L-glutamate. An N-linked (GlcNAc...) asparagine glycan is attached at N445. The chain crosses the membrane as a helical span at residues 581-603 (IAAVVFACLGLLATLFVTVVFII). Residues 604–613 (YRDTPVVKSS) are Cytoplasmic-facing. A helical membrane pass occupies residues 614–636 (SRELCYIILAGICLGYLCTFCLI). Over 637–644 (AKPKQIYC) the chain is Extracellular. C644 and C733 form a disulfide bridge. Residues 645–667 (YLQRIGIGLSPAMSYSALVTKTN) form a helical membrane-spanning segment. At 668–693 (RIARILAGSKKKICTKKPRFMSACAQ) the chain is on the cytoplasmic side. The chain crosses the membrane as a helical span at residues 694–714 (LVIAFILICIQLGIIVALFIM). The Extracellular segment spans residues 715–737 (EPPDIMHDYPSIREVYLICNTTN). A glycan (N-linked (GlcNAc...) asparagine) is linked at N734. A helical membrane pass occupies residues 738 to 759 (LGVVTPLGYNGLLILSCTFYAF). Residues 760–772 (KTRNVPANFNEAK) lie on the Cytoplasmic side of the membrane. A helical membrane pass occupies residues 773-795 (YIAFTMYTTCIIWLAFVPIYFGS). The Extracellular portion of the chain corresponds to 796-798 (NYK). The helical transmembrane segment at 799–820 (IITMCFSVSLSATVALGCMFVP) threads the bilayer. At 821 to 1212 (KVYIILAKPE…RDYTQSSSSL (392 aa)) the chain is on the cytoplasmic side. S861 is subject to Phosphoserine. R869 and R925 each carry omega-N-methylarginine. Disordered stretches follow at residues 937 to 971 (INKK…GGSA), 1010 to 1056 (FPAP…SQGS), and 1132 to 1191 (GAQA…ALCI). Residues 961–971 (LGAGAGAGGSA) are compositionally biased toward gly residues. Phosphoserine is present on residues S1018 and S1020. Positions 1132 to 1153 (GAQAAGDAARESPAAGPEAAAA) are enriched in low complexity. A compositionally biased stretch (polar residues) spans 1174–1185 (DSGSTTPNSPVS).

Belongs to the G-protein coupled receptor 3 family. In terms of assembly, the PPXXF motif binds HOMER1, HOMER2 and HOMER3. Interacts with SIAH1, RYR1, RYR2, ITPR1, SHANK1, SHANK3 and TAMALIN. Interacts with NCDN. Isoform 2 interacts with NECAB2. Interacts with CAMK2A.

It localises to the cell membrane. In terms of biological role, G-protein coupled receptor for glutamate. Ligand binding causes a conformation change that triggers signaling via guanine nucleotide-binding proteins (G proteins) and modulates the activity of down-stream effectors. Signaling activates a phosphatidylinositol-calcium second messenger system and generates a calcium-activated chloride current. Plays an important role in the regulation of synaptic plasticity and the modulation of the neural network activity. This Homo sapiens (Human) protein is Metabotropic glutamate receptor 5 (GRM5).